A 331-amino-acid chain; its full sequence is 6-phosphogluconolactonase (331 aa).

An N6-acetyllysine modification is found at K287.

This sequence belongs to the cycloisomerase 2 family.

It catalyses the reaction 6-phospho-D-glucono-1,5-lactone + H2O = 6-phospho-D-gluconate + H(+). The protein operates within carbohydrate degradation; pentose phosphate pathway; D-ribulose 5-phosphate from D-glucose 6-phosphate (oxidative stage): step 2/3. Its function is as follows. Catalyzes the hydrolysis of 6-phosphogluconolactone to 6-phosphogluconate. The sequence is that of 6-phosphogluconolactonase from Escherichia coli O7:K1 (strain IAI39 / ExPEC).